We begin with the raw amino-acid sequence, 267 residues long: UPF0246 protein Dshi_3333 (267 aa).

Belongs to the UPF0246 family.

This Dinoroseobacter shibae (strain DSM 16493 / NCIMB 14021 / DFL 12) protein is UPF0246 protein Dshi_3333.